Consider the following 255-residue polypeptide: Imidazole glycerol phosphate synthase subunit HisF (255 aa).

Catalysis depends on residues Asp-12 and Asp-131.

This sequence belongs to the HisA/HisF family. Heterodimer of HisH and HisF.

Its subcellular location is the cytoplasm. It carries out the reaction 5-[(5-phospho-1-deoxy-D-ribulos-1-ylimino)methylamino]-1-(5-phospho-beta-D-ribosyl)imidazole-4-carboxamide + L-glutamine = D-erythro-1-(imidazol-4-yl)glycerol 3-phosphate + 5-amino-1-(5-phospho-beta-D-ribosyl)imidazole-4-carboxamide + L-glutamate + H(+). It participates in amino-acid biosynthesis; L-histidine biosynthesis; L-histidine from 5-phospho-alpha-D-ribose 1-diphosphate: step 5/9. In terms of biological role, IGPS catalyzes the conversion of PRFAR and glutamine to IGP, AICAR and glutamate. The HisF subunit catalyzes the cyclization activity that produces IGP and AICAR from PRFAR using the ammonia provided by the HisH subunit. This Neisseria meningitidis serogroup C / serotype 2a (strain ATCC 700532 / DSM 15464 / FAM18) protein is Imidazole glycerol phosphate synthase subunit HisF.